We begin with the raw amino-acid sequence, 607 residues long: Arginine decarboxylase (607 aa).

Position 104 is an N6-(pyridoxal phosphate)lysine (Lys104). 290-300 (LDCGGGLGVDY) contributes to the substrate binding site.

This sequence belongs to the Orn/Lys/Arg decarboxylase class-II family. SpeA subfamily. Pyridoxal 5'-phosphate is required as a cofactor. The cofactor is Mg(2+).

It catalyses the reaction L-arginine + H(+) = agmatine + CO2. It participates in amine and polyamine biosynthesis; agmatine biosynthesis; agmatine from L-arginine: step 1/1. The protein is Arginine decarboxylase (SPE1) of Avena sativa (Oat).